We begin with the raw amino-acid sequence, 397 residues long: Elongation factor Tu (397 aa).

The tr-type G domain occupies 10-207 (KPHVNIGTIG…VLDEYVKEPV (198 aa)). The tract at residues 19 to 26 (GHIDHGKT) is G1. 19 to 26 (GHIDHGKT) contributes to the GTP binding site. Residue Thr-26 participates in Mg(2+) binding. Positions 60 to 64 (GITIS) are G2. The segment at 81 to 84 (DCPG) is G3. GTP contacts are provided by residues 81 to 85 (DCPGH) and 136 to 139 (NKCD). Residues 136-139 (NKCD) form a G4 region. The tract at residues 174 to 176 (SAL) is G5.

It belongs to the TRAFAC class translation factor GTPase superfamily. Classic translation factor GTPase family. EF-Tu/EF-1A subfamily. As to quaternary structure, monomer.

It is found in the cytoplasm. The enzyme catalyses GTP + H2O = GDP + phosphate + H(+). In terms of biological role, GTP hydrolase that promotes the GTP-dependent binding of aminoacyl-tRNA to the A-site of ribosomes during protein biosynthesis. This is Elongation factor Tu from Desulforapulum autotrophicum (strain ATCC 43914 / DSM 3382 / VKM B-1955 / HRM2) (Desulfobacterium autotrophicum).